The following is a 79-amino-acid chain: UPF0154 protein SUB0399 (79 aa).

The helical transmembrane segment at 4-24 (AIWILLIVLALIGGLFGGVFI) threads the bilayer.

It belongs to the UPF0154 family.

Its subcellular location is the cell membrane. In Streptococcus uberis (strain ATCC BAA-854 / 0140J), this protein is UPF0154 protein SUB0399.